Consider the following 484-residue polypeptide: Poly(A) polymerase alpha-B (484 aa).

The Nuclear localization signal 1 motif lies at 240–257; sequence RKQLHQLLPSHVLPKKKK. 3 disordered regions span residues 276 to 314, 326 to 356, and 375 to 484; these read SVDSDNSMSVPSPTNATRTSPLNSTGLSQGNSPATPVSL, VPQNNSTENSGGSLNESIPETATHPAFSSTP, and KPVT…RLNR. The short motif at 392–407 is the Nuclear localization signal 2 element; sequence KRTSSPTNEESPKKTK. Basic and acidic residues predominate over residues 423–441; sequence EQNKLEPEELKEVHSEEKS. The segment covering 451–464 has biased composition (low complexity); sequence SSQRSSSTDLSDIS.

This sequence belongs to the poly(A) polymerase family. In terms of assembly, monomer.

The protein localises to the nucleus. It catalyses the reaction RNA(n) + ATP = RNA(n)-3'-adenine ribonucleotide + diphosphate. Its function is as follows. Polymerase that creates the 3'-poly(A) tail of mRNA's. May acquire specificity through interaction with a cleavage and polyadenylation factor (CPSF). The polypeptide is Poly(A) polymerase alpha-B (papola-b) (Xenopus laevis (African clawed frog)).